Consider the following 313-residue polypeptide: tRNA dimethylallyltransferase (313 aa).

11-18 (GPTASGKT) contributes to the ATP binding site. 13-18 (TASGKT) lines the substrate pocket. 3 interaction with substrate tRNA regions span residues 36–39 (DSAL), 160–164 (QRINR), and 241–246 (RCVGYR).

The protein belongs to the IPP transferase family. Monomer. Mg(2+) serves as cofactor.

The enzyme catalyses adenosine(37) in tRNA + dimethylallyl diphosphate = N(6)-dimethylallyladenosine(37) in tRNA + diphosphate. Catalyzes the transfer of a dimethylallyl group onto the adenine at position 37 in tRNAs that read codons beginning with uridine, leading to the formation of N6-(dimethylallyl)adenosine (i(6)A). The polypeptide is tRNA dimethylallyltransferase (Haemophilus ducreyi (strain 35000HP / ATCC 700724)).